The primary structure comprises 1101 residues: Furin-like protease 1, isoform 1-CRR (1101 aa).

The tract at residues 1–57 is disordered; sequence MKNDVVRWSRQPTSNTTNSSSSSRSDSNSTHKHRSKSNKLNARQLGSNAARSCQQRS. The segment covering 13 to 28 has biased composition (low complexity); sequence TSNTTNSSSSSRSDSN. Residues asparagine 15, asparagine 18, and asparagine 28 are each glycosylated (N-linked (GlcNAc...) asparagine). The span at 38 to 57 shows a compositional bias: polar residues; the sequence is NKLNARQLGSNAARSCQQRS. Asparagine 108 carries an N-linked (GlcNAc...) asparagine glycan. A helical membrane pass occupies residues 119–139; that stretch reads VFLLALQFSAVVFLCNINVGF. Residues 150 to 163 are compositionally biased toward low complexity; it reads SAGGSSPAAPSSAP. Positions 150-187 are disordered; it reads SAGGSSPAAPSSAPSSPPTVAVPPPPPPSSALKVDPNG. Residues 164–178 show a composition bias toward pro residues; that stretch reads SSPPTVAVPPPPPPS. A glycan (N-linked (GlcNAc...) asparagine) is linked at asparagine 333. In terms of domain architecture, Peptidase S8 spans 340 to 654; sequence MWYLNRGGGL…YGLMDAAEMV (315 aa). Residues aspartate 372 and histidine 413 each act as charge relay system in the active site. Asparagine 426 carries an N-linked (GlcNAc...) asparagine glycan. Disulfide bonds link cysteine 430-cysteine 579 and cysteine 522-cysteine 552. Serine 587 (charge relay system) is an active-site residue. An N-linked (GlcNAc...) asparagine glycan is attached at asparagine 606. The P/Homo B domain maps to 662–791; that stretch reads AVPEQQRCEI…DMIFYGTETP (130 aa). Residues cysteine 669 and cysteine 695 are joined by a disulfide bond. Residues asparagine 727 and asparagine 859 are each glycosylated (N-linked (GlcNAc...) asparagine). The disordered stretch occupies residues 886-915; it reads EEDEQDDEVTRGPVNPYSSSPMDHSLLMSN. Over residues 901-915 the composition is skewed to polar residues; sequence PYSSSPMDHSLLMSN. Asparagine 978 carries N-linked (GlcNAc...) asparagine glycosylation. Residues 1014 to 1034 form a helical membrane-spanning segment; that stretch reads TVLLLVSVIFTLMGVAVAGGI.

This sequence belongs to the peptidase S8 family. Furin subfamily. Ca(2+) serves as cofactor. As to expression, in adults, isoform 1-CRR is expressed in CNS, fat body, and female reproductive tissues, and in embryos, in anal pads, hindgut, developing antennomaxillary complex, oenocytes, clipeolabrum, pharynx, trachea, CNS and developing posterior spiracles.

The protein resides in the golgi apparatus membrane. The enzyme catalyses Release of mature proteins from their proproteins by cleavage of -Arg-Xaa-Yaa-Arg-|-Zaa- bonds, where Xaa can be any amino acid and Yaa is Arg or Lys. Releases albumin, complement component C3 and von Willebrand factor from their respective precursors.. Furin is likely to represent the ubiquitous endoprotease activity within constitutive secretory pathways and capable of cleavage at the RX(K/R)R consensus motif. The polypeptide is Furin-like protease 1, isoform 1-CRR (Fur1) (Drosophila melanogaster (Fruit fly)).